Here is a 120-residue protein sequence, read N- to C-terminus: Large ribosomal subunit protein uL18 (120 aa).

This sequence belongs to the universal ribosomal protein uL18 family. In terms of assembly, part of the 50S ribosomal subunit; part of the 5S rRNA/L5/L18/L25 subcomplex. Contacts the 5S and 23S rRNAs.

This is one of the proteins that bind and probably mediate the attachment of the 5S RNA into the large ribosomal subunit, where it forms part of the central protuberance. In Bartonella quintana (strain Toulouse) (Rochalimaea quintana), this protein is Large ribosomal subunit protein uL18.